The following is a 219-amino-acid chain: Thymidylate kinase (219 aa).

9–16 lines the ATP pocket; it reads GIEGSGKT.

It belongs to the thymidylate kinase family.

The enzyme catalyses dTMP + ATP = dTDP + ADP. Phosphorylation of dTMP to form dTDP in both de novo and salvage pathways of dTTP synthesis. This is Thymidylate kinase from Pelobacter propionicus (strain DSM 2379 / NBRC 103807 / OttBd1).